A 66-amino-acid chain; its full sequence is MKANEIRDLTTAEIEQKVKSLKEELFNLRFQLATGQLENTARIREVRKSIARMKTVIREREIAANK.

This sequence belongs to the universal ribosomal protein uL29 family.

In Bacillus licheniformis (strain ATCC 14580 / DSM 13 / JCM 2505 / CCUG 7422 / NBRC 12200 / NCIMB 9375 / NCTC 10341 / NRRL NRS-1264 / Gibson 46), this protein is Large ribosomal subunit protein uL29.